Consider the following 388-residue polypeptide: Dual-specificity RNA methyltransferase RlmN (388 aa).

The active-site Proton acceptor is Glu-109. The Radical SAM core domain occupies 115–354 (EDDRATLCVS…TIVRKTRGDD (240 aa)). Cysteines 122 and 359 form a disulfide. 3 residues coordinate [4Fe-4S] cluster: Cys-129, Cys-133, and Cys-136. S-adenosyl-L-methionine is bound by residues 183–184 (GE), Ser-215, 237–239 (SLH), and Asn-316. The active-site S-methylcysteine intermediate is Cys-359.

Belongs to the radical SAM superfamily. RlmN family. The cofactor is [4Fe-4S] cluster.

It localises to the cytoplasm. It catalyses the reaction adenosine(2503) in 23S rRNA + 2 reduced [2Fe-2S]-[ferredoxin] + 2 S-adenosyl-L-methionine = 2-methyladenosine(2503) in 23S rRNA + 5'-deoxyadenosine + L-methionine + 2 oxidized [2Fe-2S]-[ferredoxin] + S-adenosyl-L-homocysteine. It carries out the reaction adenosine(37) in tRNA + 2 reduced [2Fe-2S]-[ferredoxin] + 2 S-adenosyl-L-methionine = 2-methyladenosine(37) in tRNA + 5'-deoxyadenosine + L-methionine + 2 oxidized [2Fe-2S]-[ferredoxin] + S-adenosyl-L-homocysteine. Specifically methylates position 2 of adenine 2503 in 23S rRNA and position 2 of adenine 37 in tRNAs. m2A2503 modification seems to play a crucial role in the proofreading step occurring at the peptidyl transferase center and thus would serve to optimize ribosomal fidelity. The sequence is that of Dual-specificity RNA methyltransferase RlmN from Salmonella typhimurium (strain LT2 / SGSC1412 / ATCC 700720).